The following is a 151-amino-acid chain: Ubiquitin-conjugating enzyme E2 2 (151 aa).

The segment at M1 to A26 is disordered. The UBC core domain occupies T4–T150. The active-site Glycyl thioester intermediate is the C88.

It belongs to the ubiquitin-conjugating enzyme family.

It is found in the cytoplasm. Its subcellular location is the nucleus. It carries out the reaction S-ubiquitinyl-[E1 ubiquitin-activating enzyme]-L-cysteine + [E2 ubiquitin-conjugating enzyme]-L-cysteine = [E1 ubiquitin-activating enzyme]-L-cysteine + S-ubiquitinyl-[E2 ubiquitin-conjugating enzyme]-L-cysteine.. It participates in protein modification; protein ubiquitination. Its function is as follows. Catalyzes the covalent attachment of ubiquitin to other proteins. Plays a role in transcription regulation by catalyzing the monoubiquitination of histone H2B to form H2BK123ub1. H2BK123ub1 gives a specific tag for epigenetic transcriptional activation and is also a prerequisite for H3K4me and H3K79me formation. Also involved in postreplication repair of UV-damaged DNA, in N-end rule-dependent protein degradation and in sporulation. This chain is Ubiquitin-conjugating enzyme E2 2 (UBC2), found in Yarrowia lipolytica (strain CLIB 122 / E 150) (Yeast).